The following is a 1047-amino-acid chain: Ubiquitin carboxyl-terminal hydrolase 28 (1047 aa).

Disordered stretches follow at residues 60 to 95 (DQEP…DPEK) and 110 to 138 (SPKA…RCEV). Residues 94-113 (EKKGDVHSAVAYGQLESPKA) form the UIM domain. The span at 111–128 (PKAHAAERPQEVHSPEHK) shows a compositional bias: basic and acidic residues. One can recognise a USP domain in the interval 156 to 651 (VGMKNIGNTC…SAYCLMYISD (496 aa)). The active-site Nucleophile is the Cys165. Residues 461–486 (STEDSQMMDRQSQGESLILGTPSQPD) show a composition bias toward polar residues. The tract at residues 461 to 528 (STEDSQMMDR…SEPPAEMSDC (68 aa)) is disordered. The span at 489–498 (LDGKDGKPED) shows a compositional bias: basic and acidic residues. Positions 504 to 516 (ANSSPQQQLNAPL) are enriched in polar residues. The active-site Proton acceptor is the His601. A disordered region spans residues 694 to 735 (EAEEWEEEQSCKIPSTASESQELSPESGLDPPAAHEQSLRSL). Residues 705-717 (KIPSTASESQELS) are compositionally biased toward polar residues.

The protein belongs to the peptidase C19 family. USP28 subfamily.

Its subcellular location is the nucleus. The protein localises to the nucleoplasm. The catalysed reaction is Thiol-dependent hydrolysis of ester, thioester, amide, peptide and isopeptide bonds formed by the C-terminal Gly of ubiquitin (a 76-residue protein attached to proteins as an intracellular targeting signal).. Functionally, deubiquitinase involved in DNA damage response checkpoint and MYC proto-oncogene stability. Involved in DNA damage induced apoptosis by specifically deubiquitinating proteins of the DNA damage pathway such as CLSPN. Also involved in G2 DNA damage checkpoint, by deubiquitinating CLSPN, and preventing its degradation by the anaphase promoting complex/cyclosome (APC/C). Specifically deubiquitinates MYC in the nucleoplasm, leading to prevent MYC degradation by the proteasome. Deubiquitinates ZNF304, hence may prevent ZNF304 degradation by the proteasome, leading to the activated KRAS-mediated promoter hypermethylation and transcriptional silencing of tumor suppressor genes (TSGs). The polypeptide is Ubiquitin carboxyl-terminal hydrolase 28 (USP28) (Gallus gallus (Chicken)).